Reading from the N-terminus, the 266-residue chain is Apolipoprotein A-I (266 aa).

The signal sequence occupies residues 1–18 (MKAVVLTLAVLFLTGSQA). Repeat copies occupy residues 67–88 (LKLL…EQIG) and 89–110 (PVTQ…QEMN). The interval 67 to 266 (LKLLDNWDSL…DEATKKLNAQ (200 aa)) is 10 X approximate tandem repeats. Methionine sulfoxide is present on Met-109. A 3; half-length repeat occupies 111–121 (KDLEEVKKKVQ). 5 repeat units span residues 122–143 (PYLD…QKVA), 144–165 (PLGA…EKLS), 166–187 (PLGE…AQLA), 188–209 (PYSE…EGGG), and 210–231 (ATLT…EKAK). The stretch at 232–242 (PALEDLRQGLM) is one 9; half-length repeat. Repeat unit 10 spans residues 243–266 (PVLESFRASLLAAVDEATKKLNAQ).

It belongs to the apolipoprotein A1/A4/E family. As to quaternary structure, homodimer. Interacts with APOA1BP and CLU. Component of a sperm activating protein complex (SPAP), consisting of APOA1, an immunoglobulin heavy chain, an immunoglobulin light chain and albumin. Interacts with NDRG1. Interacts with SCGB3A2. Interacts with NAXE and YJEFN3. Post-translationally, glycosylated. Palmitoylated. In terms of processing, phosphorylation sites are present in the extracellular medium.

It localises to the secreted. Functionally, participates in the reverse transport of cholesterol from tissues to the liver for excretion by promoting cholesterol efflux from tissues and by acting as a cofactor for the lecithin cholesterol acyltransferase (LCAT). As part of the SPAP complex, activates spermatozoa motility. In Phoca vitulina (Harbor seal), this protein is Apolipoprotein A-I (APOA1).